Consider the following 425-residue polypeptide: Interferon regulatory factor 8 (425 aa).

The segment at residues 7 to 114 (GRRLRQWLIE…EPYKVYRIVP (108 aa)) is a DNA-binding region (IRF tryptophan pentad repeat).

This sequence belongs to the IRF family.

The protein resides in the nucleus. The protein localises to the cytoplasm. Its function is as follows. Plays a role as a transcriptional activator or repressor. Specifically binds to the upstream regulatory region of type I IFN and IFN-inducible MHC class I genes (the interferon consensus sequence (ICS)). Plays a regulatory role in cells of the immune system. This Gallus gallus (Chicken) protein is Interferon regulatory factor 8 (IRF8).